Here is a 270-residue protein sequence, read N- to C-terminus: Pre-mRNA-splicing factor CWC23 (270 aa).

A J domain is found at 12 to 84; that stretch reads DLYRILHIHV…EHKKEYDIWY (73 aa).

The protein belongs to the DnaJ family. Associated with the spliceosome.

The protein localises to the cytoplasm. The protein resides in the nucleus. Involved in pre-mRNA splicing. May be involved in endoplasmic reticulum-associated protein degradation (ERAD) and required for growth at low and high temperatures. The sequence is that of Pre-mRNA-splicing factor CWC23 (CWC23) from Kluyveromyces lactis (strain ATCC 8585 / CBS 2359 / DSM 70799 / NBRC 1267 / NRRL Y-1140 / WM37) (Yeast).